A 310-amino-acid polypeptide reads, in one-letter code: MLSLRVPTPTSFDFRRYQAGDLERRWRLSRDSFLSFSPKFEENRGFRFGVKSSKSDVSFTAAEEEETLPEELHAELMPKHVAIIMDGNGRWAKNRGLQPWDGHRAGVEALKEIVELCGKWGIQVLTVFAFSTDNWIRPRIEIDFLFSLFERSLKTEFQNLAKNNVRISIIGDSSKLPKSLLRVINEVEEVTKNNTRLQLIVAVGYSGKYDVLQACRGIARRVKDGEIEVEEIDERLIEEELETNCTEFPYPDLLIRTSGELRVSNFLLWQLAYTELFFAQELWPDFGRSGFIEALMSFQQRQRRFGGRKS.

The protein belongs to the UPP synthase family. Mg(2+) is required as a cofactor.

Its pathway is protein modification; protein glycosylation. Functionally, catalyzes cis-prenyl chain elongation to produce the polyprenyl backbone of dolichol, a glycosyl carrier-lipid required for the biosynthesis of several classes of glycoprotein. This Arabidopsis thaliana (Mouse-ear cress) protein is Dehydrodolichyl diphosphate synthase 2.